The chain runs to 872 residues: DNA mismatch repair protein MutS (872 aa).

Position 623 to 630 (623 to 630 (GPNMAGKS)) interacts with ATP.

This sequence belongs to the DNA mismatch repair MutS family.

Functionally, this protein is involved in the repair of mismatches in DNA. It is possible that it carries out the mismatch recognition step. This protein has a weak ATPase activity. This is DNA mismatch repair protein MutS from Trichlorobacter lovleyi (strain ATCC BAA-1151 / DSM 17278 / SZ) (Geobacter lovleyi).